The following is a 56-amino-acid chain: Pituitary adenylate cyclase-activating polypeptide (56 aa).

Residues 42–50 form an important for receptor binding region; the sequence is VKKYLAAVL. The residue at position 50 (Leu50) is a Leucine amide.

Belongs to the glucagon family. In terms of assembly, interacts with ADCYAP1R1 (via N-terminal extracellular domain).

Its subcellular location is the secreted. PACAP is a neuropeptide involved in diverse array of physiological processes through activating the PACAP subfamily of class B1 G protein-coupled receptors: VIP receptor 1 (VIPR1), VIP receptor 2 (VIPR2), and PACAP type I receptor (ADCYAP1R1). Exerts neuroprotective and general cytoprotective effects due to anti-apoptotic, anti-inflammatory, and antioxidant actions. This chain is Pituitary adenylate cyclase-activating polypeptide (Adcyap1), found in Heloderma suspectum (Gila monster).